We begin with the raw amino-acid sequence, 124 residues long: Small ribosomal subunit protein uS13 (124 aa).

Positions 95–124 (GLPVRGQRTKTNARTRKGPKRTIAGKKKAR) are disordered.

Belongs to the universal ribosomal protein uS13 family. Part of the 30S ribosomal subunit. Forms a loose heterodimer with protein S19. Forms two bridges to the 50S subunit in the 70S ribosome.

Functionally, located at the top of the head of the 30S subunit, it contacts several helices of the 16S rRNA. In the 70S ribosome it contacts the 23S rRNA (bridge B1a) and protein L5 of the 50S subunit (bridge B1b), connecting the 2 subunits; these bridges are implicated in subunit movement. Contacts the tRNAs in the A and P-sites. In Mycolicibacterium smegmatis (strain ATCC 700084 / mc(2)155) (Mycobacterium smegmatis), this protein is Small ribosomal subunit protein uS13.